A 286-amino-acid chain; its full sequence is Versiconal hemiacetal acetate esterase stcI (286 aa).

An Involved in the stabilization of the negatively charged intermediate by the formation of the oxyanion hole motif is present at residues 54 to 56; it reads HAG. Active-site residues include S123, D226, and H256.

Belongs to the 'GDXG' lipolytic enzyme family.

The catalysed reaction is (2S,3S)-versiconal hemiacetal acetate + H2O = (2S-3S)-versiconal hemiacetal + acetate + H(+). The enzyme catalyses (3S)-versiconol acetate + H2O = (S)-versiconol + acetate + H(+). Its pathway is mycotoxin biosynthesis; sterigmatocystin biosynthesis. In terms of biological role, esterase; part of the gene cluster that mediates the biosynthesis of sterigmatocystin (ST), a polyketide-derived furanocoumarin which is part of the most toxic and carcinogenic compounds among the known mycotoxins. The first step in the biosynthesis of sterigmatocystin is the production of hexanoate by the fatty acid synthase (FAS) units stcJ and stcK. The polyketide backbone is assembled by the non-reducing polyketide synthase stcA by condensation of the starter hexanoyl-CoA and 7 malonyl-CoA extender units followed by cyclization and release of norsolorinic acid. Norsolorinic acid is the first stable intermediate in the biosynthesis of sterigmatocystin and is converted into averantin (AVN) by the ketoreductase stcE which reduces the hexanoate ketone to an alcohol. Averantin is then oxidized into 5'-hydroxyaverantin (HAVN) by the cytochrome P450 monooxygenase stcF. 5'-hydroxyaverantin is further converted to 5'-oxyaverantin (OAVN) by the 5'-hydroxyaverantin dehydrogenase stcG. The next step is the conversion of OAVN into averufin (AVF) which is catalyzed by a yet to be identified enzyme. The cytochrome P450 monooxygenase stcB and the flavin-binding monooxygenase stcW are both required for the conversion of averufin to 1-hydroxyversicolorone. The esterase stcI probably catalyzes the formation of versiconal hemiacetal acetate from 1-hydroxyversicolorone. The oxydoreductase stcN then probably catalyzes the biosynthetic step from versiconal to versicolorin B (VERB). The next step is performed by the versicolorin B desaturase stcL to produce versicolorin A (VERA). The ketoreductase stcU and the cytochrome P450 monooxygenase stcS are involved in the conversion of versicolorin A to demethylsterigmatocystin. The Baeyer-Villiger oxidas stcQ and the reductase stcR might be involved in the biosynthetic step from versicolorin A to demethylsterigmatocystin. The final step in the biosynthesis of sterigmatocystin is the methylation of demethylsterigmatocystin catalyzed by the methyltransferase stcP. The protein is Versiconal hemiacetal acetate esterase stcI of Emericella nidulans (strain FGSC A4 / ATCC 38163 / CBS 112.46 / NRRL 194 / M139) (Aspergillus nidulans).